The chain runs to 211 residues: Protein-L-isoaspartate O-methyltransferase (211 aa).

Ser60 is an active-site residue.

The protein belongs to the methyltransferase superfamily. L-isoaspartyl/D-aspartyl protein methyltransferase family.

It is found in the cytoplasm. It catalyses the reaction [protein]-L-isoaspartate + S-adenosyl-L-methionine = [protein]-L-isoaspartate alpha-methyl ester + S-adenosyl-L-homocysteine. Catalyzes the methyl esterification of L-isoaspartyl residues in peptides and proteins that result from spontaneous decomposition of normal L-aspartyl and L-asparaginyl residues. It plays a role in the repair and/or degradation of damaged proteins. The sequence is that of Protein-L-isoaspartate O-methyltransferase from Pseudomonas aeruginosa (strain LESB58).